The primary structure comprises 625 residues: Autophagy-related protein 20 (625 aa).

Residues 1-59 (MNPNDNNLFGDIEQDNNPSFYGNQSFLRDPYGKSKQTCPPSVTSNGDPSITNDDNNSAH) form a disordered region. Polar residues-rich tracts occupy residues 15 to 26 (DNNPSFYGNQSF) and 34 to 59 (SKQT…NSAH). Residues 79-202 (NDPNLQINVI…HKFLDPNYEL (124 aa)) form the PX domain. The a 1,2-diacyl-sn-glycero-3-phospho-(1D-myo-inositol-3-phosphate) site is built by R118, S120, K144, and R167.

The protein belongs to the sorting nexin family.

It localises to the endosome membrane. The protein resides in the preautophagosomal structure membrane. In terms of biological role, required for cytoplasm to vacuole transport (Cvt), pexophagy and mitophagy. Also involved in endoplasmic reticulum-specific autophagic process and is essential for the survival of cells subjected to severe ER stress. Functions in protein retrieval from the endocytic pathway. This chain is Autophagy-related protein 20 (ATG20), found in Debaryomyces hansenii (strain ATCC 36239 / CBS 767 / BCRC 21394 / JCM 1990 / NBRC 0083 / IGC 2968) (Yeast).